The chain runs to 353 residues: Uroporphyrinogen decarboxylase (353 aa).

Substrate-binding positions include 28–32, Asp-78, Tyr-155, Ser-210, and His-325; that span reads RQAGR.

It belongs to the uroporphyrinogen decarboxylase family. Homodimer.

It is found in the cytoplasm. The enzyme catalyses uroporphyrinogen III + 4 H(+) = coproporphyrinogen III + 4 CO2. The protein operates within porphyrin-containing compound metabolism; protoporphyrin-IX biosynthesis; coproporphyrinogen-III from 5-aminolevulinate: step 4/4. In terms of biological role, catalyzes the decarboxylation of four acetate groups of uroporphyrinogen-III to yield coproporphyrinogen-III. The chain is Uroporphyrinogen decarboxylase from Nostoc punctiforme (strain ATCC 29133 / PCC 73102).